The chain runs to 219 residues: uncharacterized protein (219 aa).

A compositionally biased stretch (basic residues) spans 139–154; it reads PRKIKQKKKTKKKRPS. The segment at 139-160 is disordered; that stretch reads PRKIKQKKKTKKKRPSKSAPKT. In terms of domain architecture, LysM spans 159 to 217; the sequence is KTYTVKKGDTLWDLAGKFYGDSTKWRKIWKVNKKAMIKRSKRNIRQPGHWIFPGQKLKI.

This is an uncharacterized protein from Bacillus subtilis (strain 168).